A 334-amino-acid polypeptide reads, in one-letter code: N-acetyl-gamma-glutamyl-phosphate reductase (334 aa).

Residue cysteine 154 is part of the active site.

This sequence belongs to the NAGSA dehydrogenase family. Type 1 subfamily.

Its subcellular location is the cytoplasm. The enzyme catalyses N-acetyl-L-glutamate 5-semialdehyde + phosphate + NADP(+) = N-acetyl-L-glutamyl 5-phosphate + NADPH + H(+). The protein operates within amino-acid biosynthesis; L-arginine biosynthesis; N(2)-acetyl-L-ornithine from L-glutamate: step 3/4. Catalyzes the NADPH-dependent reduction of N-acetyl-5-glutamyl phosphate to yield N-acetyl-L-glutamate 5-semialdehyde. In Buchnera aphidicola subsp. Acyrthosiphon pisum (strain 5A), this protein is N-acetyl-gamma-glutamyl-phosphate reductase.